The following is a 452-amino-acid chain: Imidazoleglycerol-phosphate dehydratase (452 aa).

Residues 1 to 233 (MASPVQALLL…VGASVVLTPG (233 aa)) form a unknown activity region. The tract at residues 234 to 452 (LGELLDLVPA…GVPSTKGVLA (219 aa)) is imidazoleglycerol-phosphate dehydratase.

The protein belongs to the imidazoleglycerol-phosphate dehydratase family.

It carries out the reaction D-erythro-1-(imidazol-4-yl)glycerol 3-phosphate = 3-(imidazol-4-yl)-2-oxopropyl phosphate + H2O. It functions in the pathway amino-acid biosynthesis; L-histidine biosynthesis; L-histidine from 5-phospho-alpha-D-ribose 1-diphosphate: step 6/9. The chain is Imidazoleglycerol-phosphate dehydratase (HIS3) from Phytophthora nicotianae (Potato buckeye rot agent).